We begin with the raw amino-acid sequence, 171 residues long: MSGLQGPSVGDGCNGGGARAGGSCCRRRCFRGFGRRVQGAAFPGRQPAELGPVPRGLPAAAAPVCPAASAAAAGGILASEHSRGPSAAGGHPGPAASEPVLPPLPGPQRRATPGHTGCLSPGCPDQPARWSEWPGPSGPPGPELQQPGDTAGLCPADARSGCALAVSQLPL.

2 disordered regions span residues 1-22 (MSGL…RAGG) and 76-156 (ILAS…LCPA). Low complexity predominate over residues 84-99 (GPSAAGGHPGPAASEP).

In terms of assembly, interacts with calpain-2 catalytic subunit CAPN2. In terms of processing, cleaved in vitro following UV irradiation to induce caspase-mediated apoptosis and this cleavage is inhibited by a broad-spectrum caspase inhibitor.

It localises to the cytoplasm. Its subcellular location is the cytoskeleton. This is PIDD1 alternative open reading frame protein from Homo sapiens (Human).